The primary structure comprises 308 residues: Porphobilinogen deaminase (308 aa).

An S-(dipyrrolylmethanemethyl)cysteine modification is found at Cys-241.

It belongs to the HMBS family. Monomer. Dipyrromethane is required as a cofactor.

It catalyses the reaction 4 porphobilinogen + H2O = hydroxymethylbilane + 4 NH4(+). Its pathway is porphyrin-containing compound metabolism; protoporphyrin-IX biosynthesis; coproporphyrinogen-III from 5-aminolevulinate: step 2/4. Its function is as follows. Tetrapolymerization of the monopyrrole PBG into the hydroxymethylbilane pre-uroporphyrinogen in several discrete steps. In Staphylococcus aureus (strain Mu50 / ATCC 700699), this protein is Porphobilinogen deaminase.